We begin with the raw amino-acid sequence, 365 residues long: Chorismate synthase (365 aa).

NADP(+)-binding residues include Arg-48 and Arg-54. FMN contacts are provided by residues 131 to 133, 243 to 244, Gly-288, 303 to 307, and Arg-329; these read RSS, NA, and KPTSS.

Belongs to the chorismate synthase family. In terms of assembly, homotetramer. Requires FMNH2 as cofactor.

It carries out the reaction 5-O-(1-carboxyvinyl)-3-phosphoshikimate = chorismate + phosphate. Its pathway is metabolic intermediate biosynthesis; chorismate biosynthesis; chorismate from D-erythrose 4-phosphate and phosphoenolpyruvate: step 7/7. Catalyzes the anti-1,4-elimination of the C-3 phosphate and the C-6 proR hydrogen from 5-enolpyruvylshikimate-3-phosphate (EPSP) to yield chorismate, which is the branch point compound that serves as the starting substrate for the three terminal pathways of aromatic amino acid biosynthesis. This reaction introduces a second double bond into the aromatic ring system. This is Chorismate synthase from Rhizobium leguminosarum bv. trifolii (strain WSM2304).